The chain runs to 418 residues: MSTAYYLSKLSERRRSVAVMVGDVGVGGDHPIVVQSMTNTDTADIDATVMQVSALWRAGSQLVRITVDRDEAAAAVPKIRERLERLGIFVPLVGDFHYIGHKLLVQHPACAQALAKYRINPGNVGFGAKKDLQFSQIIEIACQYNKPIRIGVNWGSLDEALLTQLMDENAQQEKPLSMAEVMREAVIQSALHSAFAAEKMGLGRDKIILSAKVSDVQDLIAVYTLLAKRSDHALHVGLTEAGMGTKGVVASSAALGILLQQGIGDTIRISLTPEPGGDRTREVKVCQELLQVMGFRQFVPVVAACPGCGRTTSTVFQTLAQKIEANLCKNMPIWREKYPGIERLKVAVMGCIVNGPGESKHADIGISLPGTGELPAAPVFIEGKKVKVLRGHHIAEEFEEILSDYIRTRFGQHEQKRA.

[4Fe-4S] cluster-binding residues include Cys-305, Cys-308, Cys-351, and Glu-358.

It belongs to the IspG family. [4Fe-4S] cluster serves as cofactor.

It catalyses the reaction (2E)-4-hydroxy-3-methylbut-2-enyl diphosphate + oxidized [flavodoxin] + H2O + 2 H(+) = 2-C-methyl-D-erythritol 2,4-cyclic diphosphate + reduced [flavodoxin]. It functions in the pathway isoprenoid biosynthesis; isopentenyl diphosphate biosynthesis via DXP pathway; isopentenyl diphosphate from 1-deoxy-D-xylulose 5-phosphate: step 5/6. Converts 2C-methyl-D-erythritol 2,4-cyclodiphosphate (ME-2,4cPP) into 1-hydroxy-2-methyl-2-(E)-butenyl 4-diphosphate. In Bartonella bacilliformis (strain ATCC 35685 / KC583 / Herrer 020/F12,63), this protein is 4-hydroxy-3-methylbut-2-en-1-yl diphosphate synthase (flavodoxin).